The following is a 165-amino-acid chain: Small histone ubiquitination factor 1 (165 aa).

The segment covering 1–17 (MSSRRNDYHYDGNDHQY) has biased composition (basic and acidic residues). Positions 1–86 (MSSRRNDYHY…STRASFGAAS (86 aa)) are disordered. 2 stretches are compositionally biased toward low complexity: residues 29–38 (SFYESSYRSR) and 50–60 (SSYDSPSSSTN). Polar residues predominate over residues 73-86 (PSNNSTRASFGAAS).

As to quaternary structure, component of the histone H2B ubiquitin ligase complex (HULC) composed of at least brl1, brl2, rhp6 and shf1.

It localises to the nucleus. The protein localises to the cytoplasm. Its subcellular location is the cytoskeleton. The protein resides in the microtubule organizing center. It is found in the spindle pole body. Component of the histone H2B ubiquitin ligase complex (HULC) which plays a role in transcription regulation by catalyzing the monoubiquitination of histone H2B to form H2BK123ub1. H2BK123ub1 gives a specific tag for epigenetic transcriptional activation and is also a prerequisite for H3K4me and H3K79me formation. The polypeptide is Small histone ubiquitination factor 1 (shf1) (Schizosaccharomyces pombe (strain 972 / ATCC 24843) (Fission yeast)).